A 507-amino-acid polypeptide reads, in one-letter code: MAPRRTYQQEMAFLSRVSANQWIVNEGFVPNMRVPGTFYVNKHLETLMFEELQQHVDSGGHGGFLPAVKQLANVACLPGIVGKSIAMPDVHSGYGFCIGNVAAFDMSDPAAVVSPGGVGFDINCGVRVVRTNLMESDVADVKEKLAQALFDHIPVGVGSQGIIPTSAAGLESALEMGMDWSLREGYAWAEDKEHCEEYGRMLTADPNKVSARAKKRGLPQMGTLGAGNHYAEIQVVDEIFDAHAAEKMGVDAVGQVMVMIHSGSRGLGHQVATDALTEMERAMARDGIETNDRQLACARINSTEGQNYLSAMSCAANYAWVNRSSMTFLCRQAFAKMFDSTPDDLDMHVVYDVSHNIAKIEEHMVDGKLKTLLVHRKGSTRAFPPHHPLIPVDYQYTGQPVMIGGTMGTCSYILTGTQKGMDETFGSTCHGAGRARSRNNSRNKLDYAEVLENLKTKGISIRVASPKLVMEEAPESYKDVTEVVNTCHDAGISKKAVKLRPIAVVKG.

The Mn(2+) site is built by D121, C124, H229, H261, and H355. A GMP-binding site is contributed by N228–E232. Residues H355–N356, G404–M407, S411, H430–G433, and K506 each bind GMP. H430 (GMP-histidine intermediate) is an active-site residue.

This sequence belongs to the RtcB family. In terms of assembly, catalytic component of the tRNA-splicing ligase complex. Mn(2+) is required as a cofactor.

The catalysed reaction is a 3'-end 3'-phospho-ribonucleotide-RNA + a 5'-end dephospho-ribonucleoside-RNA + GTP = a ribonucleotidyl-ribonucleotide-RNA + GMP + diphosphate. It catalyses the reaction a 3'-end 2',3'-cyclophospho-ribonucleotide-RNA + a 5'-end dephospho-ribonucleoside-RNA + GTP + H2O = a ribonucleotidyl-ribonucleotide-RNA + GMP + diphosphate + H(+). Its function is as follows. Catalytic subunit of the tRNA-splicing ligase complex that acts by directly joining spliced tRNA halves to mature-sized tRNAs by incorporating the precursor-derived splice junction phosphate into the mature tRNA as a canonical 3',5'-phosphodiester. May act as an RNA ligase with broad substrate specificity, and may function toward other RNAs. The protein is RNA-splicing ligase RtcB homolog of Micromonas pusilla (strain CCMP1545) (Picoplanktonic green alga).